The chain runs to 806 residues: N-terminal kinase-like protein (806 aa).

Positions 14 to 314 constitute a Protein kinase domain; it reads FELSPEPPEG…PEDFCRHKVL (301 aa). HEAT repeat units follow at residues 350 to 388, 389 to 427, and 507 to 545; these read IIPV…VNTQ, IFPH…LNVE, and ILPV…EDPT. Disordered stretches follow at residues 586-642 and 663-806; these read RAHP…TADR and DDWS…RKLD. Pro residues predominate over residues 601-611; sequence RPVPEGNPAPA. Position 752 is a phosphoserine (serine 752). Acidic residues predominate over residues 752–762; the sequence is SWGEDNWEGLE. Residues 755-795 are a coiled coil; it reads EDNWEGLEAESRQVKAELARKKREERRREMEAKRAEKKTTK. 2 stretches are compositionally biased toward basic and acidic residues: residues 763–773 and 780–793; these read AESRQVKAELA and RRRE…EKKT. Residues 791 to 806 are interaction with COPB1; sequence KKTTKGPMKLGARKLD.

Belongs to the protein kinase superfamily. As to quaternary structure, homooligomer. Interacts with GORAB. Interacts with COPA, COPB1 and COPB2. Interacts with AP2B1. As to expression, expressed in diaphragm, quadriceps, thymus, liver, lung, spleen, kidney, heart and brain. Prominently expressed in neurons, and enriched at central nervous system synapses and neuromuscular junctions.

Its subcellular location is the cytoplasm. The protein localises to the cytoskeleton. It is found in the microtubule organizing center. It localises to the centrosome. The protein resides in the endoplasmic reticulum-Golgi intermediate compartment. Its subcellular location is the golgi apparatus. The protein localises to the cis-Golgi network. Its function is as follows. Regulates COPI-mediated retrograde protein traffic at the interface between the Golgi apparatus and the endoplasmic reticulum. Involved in the maintenance of the Golgi apparatus morphology. This Mus musculus (Mouse) protein is N-terminal kinase-like protein (Scyl1).